The sequence spans 470 residues: Sulfate adenylyltransferase subunit 1 (470 aa).

The tr-type G domain occupies 22–237 (KEVLRFITCG…LEEVPVKSEE (216 aa)). The interval 31-38 (GSVDDGKS) is G1. Residue 31-38 (GSVDDGKS) coordinates GTP. Residues 89-93 (GITID) form a G2 region. Residues 110 to 113 (DTPG) form a G3 region. Residues 110–114 (DTPGH) and 165–168 (NKMD) contribute to the GTP site. The tract at residues 165–168 (NKMD) is G4. The segment at 202-204 (SAK) is G5.

The protein belongs to the TRAFAC class translation factor GTPase superfamily. Classic translation factor GTPase family. CysN/NodQ subfamily. Heterodimer composed of CysD, the smaller subunit, and CysN.

It catalyses the reaction sulfate + ATP + H(+) = adenosine 5'-phosphosulfate + diphosphate. Its pathway is sulfur metabolism; hydrogen sulfide biosynthesis; sulfite from sulfate: step 1/3. Functionally, with CysD forms the ATP sulfurylase (ATPS) that catalyzes the adenylation of sulfate producing adenosine 5'-phosphosulfate (APS) and diphosphate, the first enzymatic step in sulfur assimilation pathway. APS synthesis involves the formation of a high-energy phosphoric-sulfuric acid anhydride bond driven by GTP hydrolysis by CysN coupled to ATP hydrolysis by CysD. In Methylorubrum populi (strain ATCC BAA-705 / NCIMB 13946 / BJ001) (Methylobacterium populi), this protein is Sulfate adenylyltransferase subunit 1.